We begin with the raw amino-acid sequence, 464 residues long: Protein FAM90A8 (464 aa).

Disordered regions lie at residues 1–42 (MMAR…DPRL), 69–389 (VPAT…HDGA), and 415–437 (HSPEKPGAFLAQSPHVSEKSEAP). Basic and acidic residues-rich tracts occupy residues 74–89 (GKKEGKENLKPWKPRG) and 97–114 (NKDKGEKEERPRQQDPQR). The span at 180 to 197 (LASLSPLRKASLSSSSSL) shows a compositional bias: low complexity.

It belongs to the FAM90 family.

The protein is Protein FAM90A8 (FAM90A8) of Homo sapiens (Human).